The chain runs to 322 residues: Interferon regulatory factor 1 (322 aa).

Residues R5–P113 constitute a DNA-binding region (IRF tryptophan pentad repeat). An N6-acetyllysine modification is found at K78. A disordered region spans residues E92–Y164. The segment covering G141–L157 has biased composition (polar residues). Residues K276 and K296 each participate in a glycyl lysine isopeptide (Lys-Gly) (interchain with G-Cter in SUMO) cross-link.

It belongs to the IRF family. As to quaternary structure, monomer. Homodimer. Interacts with EP300. Interacts with MYD88. Interacts with PIAS3. Interacts with SPOP. Post-translationally, phosphorylated by CK2 and this positively regulates its activity. In terms of processing, sumoylation represses the transcriptional activity and displays enhanced resistance to protein degradation. Sumoylated by UBE2I/UBC9 and SUMO1. Inactivates the tumor suppressor activity. Elevated levels in tumor cells. Major site is Lys-276. Sumoylation is enhanced by PIAS3. Desumoylated by SENP1 in tumor cells and appears to compete with ubiquitination on C-terminal sites. Ubiquitinated in a SPOP-depedent manner. Appears to compete with sumoylation on C-terminal sites.

It is found in the nucleus. It localises to the cytoplasm. Activated by MYD88. Functionally, transcriptional regulator which displays a remarkable functional diversity in the regulation of cellular responses. Regulates transcription of IFN and IFN-inducible genes, host response to viral and bacterial infections, regulation of many genes expressed during hematopoiesis, inflammation, immune responses and cell proliferation and differentiation, regulation of the cell cycle and induction of growth arrest and programmed cell death following DNA damage. Stimulates both innate and acquired immune responses through the activation of specific target genes and can act as a transcriptional activator and repressor regulating target genes by binding to an interferon-stimulated response element (ISRE) in their promoters. Has an essentail role in IFNG-dependent immunity to mycobacteria. Binds to a consensus sequence in gene promoters. Its target genes for transcriptional activation activity include: genes involved in anti-viral response, such as IFN-alpha/beta, RIGI, TNFSF10/TRAIL, ZBP1, OAS1/2, PIAS1/GBP, EIF2AK2/PKR and RSAD2/viperin; antibacterial response, such as GBP2, GBP5 and NOS2/INOS; anti-proliferative response, such as p53/TP53, LOX and CDKN1A; apoptosis, such as BBC3/PUMA, CASP1, CASP7 and CASP8; immune response, such as IL7, IL12A/B and IL15, PTGS2/COX2 and CYBB; DNA damage responses and DNA repair, such as POLQ/POLH; MHC class I expression, such as TAP1, PSMB9/LMP2, PSME1/PA28A, PSME2/PA28B and B2M and MHC class II expression, such as CIITA; metabolic enzymes, such as ACOD1/IRG1. Represses genes involved in anti-proliferative response, such as BIRC5/survivin, CCNB1, CCNE1, CDK1, CDK2 and CDK4 and in immune response, such as FOXP3, IL4, ANXA2 and TLR4. Stimulates p53/TP53-dependent transcription through enhanced recruitment of EP300 leading to increased acetylation of p53/TP53. Plays an important role in immune response directly affecting NK maturation and activity, macrophage production of IL12, Th1 development and maturation of CD8+ T-cells. Also implicated in the differentiation and maturation of dendritic cells and in the suppression of regulatory T (Treg) cells development. Acts as a tumor suppressor and plays a role not only in antagonism of tumor cell growth but also in stimulating an immune response against tumor cells. This is Interferon regulatory factor 1 (IRF1) from Sus scrofa (Pig).